A 49-amino-acid chain; its full sequence is Large ribosomal subunit protein bL33 (49 aa).

The protein belongs to the bacterial ribosomal protein bL33 family.

The polypeptide is Large ribosomal subunit protein bL33 (Nitratidesulfovibrio vulgaris (strain ATCC 29579 / DSM 644 / CCUG 34227 / NCIMB 8303 / VKM B-1760 / Hildenborough) (Desulfovibrio vulgaris)).